Reading from the N-terminus, the 560-residue chain is Synaptotagmin-5 (560 aa).

The helical transmembrane segment at 2–22 threads the bilayer; sequence GFIVGVVIGLLVGIAIIIGFV. The SMP-LTD domain occupies 67–249; that stretch reads ERQKLTWLNH…WPVRKVIPII (183 aa). The interval 227 to 523 is phospholipid binding; that stretch reads EETIRDAVED…YIGRCILTLT (297 aa). 2 C2 domains span residues 243 to 364 and 417 to 535; these read RKVI…DVWL and TTDE…KDWY. Positions 278, 284, 334, 336, 451, 457, 506, 508, and 513 each coordinate Ca(2+).

The protein belongs to the synaptotagmin family. Ca(2+) is required as a cofactor.

It is found in the membrane. May be involved in membrane trafficking. This Arabidopsis thaliana (Mouse-ear cress) protein is Synaptotagmin-5 (SYT5).